Here is a 655-residue protein sequence, read N- to C-terminus: p-hydroxybenzoic acid efflux pump subunit AaeB (655 aa).

11 helical membrane-spanning segments follow: residues 13-33, 38-58, 69-89, 93-113, 121-141, 152-172, 370-390, 407-427, 431-451, 459-479, and 482-502; these read FAVK…HFQL, WAVL…GGEP, LRII…ITMI, LLMI…SSLV, WGLS…EPLL, EIVI…PRSV, LFWL…IAVV, FIYG…VIIP, QSML…GIEV, MGAL…TFHF, and FLDS…VILL.

It belongs to the aromatic acid exporter ArAE (TC 2.A.85) family.

Its subcellular location is the cell inner membrane. Its function is as follows. Forms an efflux pump with AaeA. Could function as a metabolic relief valve, allowing to eliminate certain compounds when they accumulate to high levels in the cell. The chain is p-hydroxybenzoic acid efflux pump subunit AaeB from Citrobacter koseri (strain ATCC BAA-895 / CDC 4225-83 / SGSC4696).